Here is a 203-residue protein sequence, read N- to C-terminus: Small ribosomal subunit protein uS4 (203 aa).

One can recognise an S4 RNA-binding domain in the interval 93 to 156 (RRLDNVVYRL…LKVPAILEAV (64 aa)).

Belongs to the universal ribosomal protein uS4 family. As to quaternary structure, part of the 30S ribosomal subunit. Contacts protein S5. The interaction surface between S4 and S5 is involved in control of translational fidelity.

One of the primary rRNA binding proteins, it binds directly to 16S rRNA where it nucleates assembly of the body of the 30S subunit. Functionally, with S5 and S12 plays an important role in translational accuracy. This chain is Small ribosomal subunit protein uS4, found in Streptococcus sanguinis (strain SK36).